Consider the following 194-residue polypeptide: Oligoribonuclease (194 aa).

One can recognise an Exonuclease domain in the interval 11 to 174 (LIWIDLEMTG…SDVRDSIDEL (164 aa)). The active site involves Y132.

Belongs to the oligoribonuclease family.

It localises to the cytoplasm. Its function is as follows. 3'-to-5' exoribonuclease specific for small oligoribonucleotides. This Xanthomonas campestris pv. campestris (strain ATCC 33913 / DSM 3586 / NCPPB 528 / LMG 568 / P 25) protein is Oligoribonuclease.